Consider the following 122-residue polypeptide: Large ribosomal subunit protein uL14 (122 aa).

It belongs to the universal ribosomal protein uL14 family. As to quaternary structure, part of the 50S ribosomal subunit. Forms a cluster with proteins L3 and L19. In the 70S ribosome, L14 and L19 interact and together make contacts with the 16S rRNA in bridges B5 and B8.

Binds to 23S rRNA. Forms part of two intersubunit bridges in the 70S ribosome. The sequence is that of Large ribosomal subunit protein uL14 from Maricaulis maris (strain MCS10) (Caulobacter maris).